A 167-amino-acid chain; its full sequence is SsrA-binding protein (167 aa).

A compositionally biased stretch (basic and acidic residues) spans 139–158; it reads QNHDKRDAAKERDWQRDKQR. The segment at 139 to 167 is disordered; that stretch reads QNHDKRDAAKERDWQRDKQRVMRRHNRDA.

The protein belongs to the SmpB family.

Its subcellular location is the cytoplasm. In terms of biological role, required for rescue of stalled ribosomes mediated by trans-translation. Binds to transfer-messenger RNA (tmRNA), required for stable association of tmRNA with ribosomes. tmRNA and SmpB together mimic tRNA shape, replacing the anticodon stem-loop with SmpB. tmRNA is encoded by the ssrA gene; the 2 termini fold to resemble tRNA(Ala) and it encodes a 'tag peptide', a short internal open reading frame. During trans-translation Ala-aminoacylated tmRNA acts like a tRNA, entering the A-site of stalled ribosomes, displacing the stalled mRNA. The ribosome then switches to translate the ORF on the tmRNA; the nascent peptide is terminated with the 'tag peptide' encoded by the tmRNA and targeted for degradation. The ribosome is freed to recommence translation, which seems to be the essential function of trans-translation. The protein is SsrA-binding protein of Xanthomonas oryzae pv. oryzae (strain MAFF 311018).